A 185-amino-acid chain; its full sequence is Peptidyl-tRNA hydrolase (185 aa).

Residue Y14 participates in tRNA binding. H19 functions as the Proton acceptor in the catalytic mechanism. TRNA contacts are provided by Y65, N67, and N113.

The protein belongs to the PTH family. In terms of assembly, monomer.

The protein localises to the cytoplasm. It carries out the reaction an N-acyl-L-alpha-aminoacyl-tRNA + H2O = an N-acyl-L-amino acid + a tRNA + H(+). In terms of biological role, hydrolyzes ribosome-free peptidyl-tRNAs (with 1 or more amino acids incorporated), which drop off the ribosome during protein synthesis, or as a result of ribosome stalling. Its function is as follows. Catalyzes the release of premature peptidyl moieties from peptidyl-tRNA molecules trapped in stalled 50S ribosomal subunits, and thus maintains levels of free tRNAs and 50S ribosomes. This chain is Peptidyl-tRNA hydrolase, found in Rickettsia bellii (strain OSU 85-389).